The primary structure comprises 370 residues: UDP-N-acetylglucosamine--N-acetylmuramyl-(pentapeptide) pyrophosphoryl-undecaprenol N-acetylglucosamine transferase (370 aa).

UDP-N-acetyl-alpha-D-glucosamine-binding positions include 15 to 17, N129, R171, S200, I256, and Q301; that span reads TGG.

This sequence belongs to the glycosyltransferase 28 family. MurG subfamily.

The protein localises to the cell membrane. It carries out the reaction di-trans,octa-cis-undecaprenyl diphospho-N-acetyl-alpha-D-muramoyl-L-alanyl-D-glutamyl-meso-2,6-diaminopimeloyl-D-alanyl-D-alanine + UDP-N-acetyl-alpha-D-glucosamine = di-trans,octa-cis-undecaprenyl diphospho-[N-acetyl-alpha-D-glucosaminyl-(1-&gt;4)]-N-acetyl-alpha-D-muramoyl-L-alanyl-D-glutamyl-meso-2,6-diaminopimeloyl-D-alanyl-D-alanine + UDP + H(+). It participates in cell wall biogenesis; peptidoglycan biosynthesis. Cell wall formation. Catalyzes the transfer of a GlcNAc subunit on undecaprenyl-pyrophosphoryl-MurNAc-pentapeptide (lipid intermediate I) to form undecaprenyl-pyrophosphoryl-MurNAc-(pentapeptide)GlcNAc (lipid intermediate II). This is UDP-N-acetylglucosamine--N-acetylmuramyl-(pentapeptide) pyrophosphoryl-undecaprenol N-acetylglucosamine transferase from Caldicellulosiruptor saccharolyticus (strain ATCC 43494 / DSM 8903 / Tp8T 6331).